The chain runs to 187 residues: MRPTSGCSKDDTIQKQNRRHNTVDNKQEKLPLSIEIFLNKQINKISFDTIRSKQNCRLKEIYCRLKIRCRLKKKFIKSLSKKIISYHFISFHTIVVLLLLPPFSHLLVLVYPSVFTTAFYHQKWALRLNPCLPTYFFHRQRQCVTLLIRNANENMRARRVNSVMLTKPKQFLFLLEFITLFIFTYCL.

The tract at residues 1–24 (MRPTSGCSKDDTIQKQNRRHNTVD) is disordered. The next 2 membrane-spanning stretches (helical) occupy residues 83-105 (IISY…PFSH) and 163-183 (VMLT…LFIF).

It is found in the cytoplasm. Its subcellular location is the nucleus membrane. Has a role in meiosis. This is Meiotically up-regulated gene 155 protein (mug155) from Schizosaccharomyces pombe (strain 972 / ATCC 24843) (Fission yeast).